Here is a 120-residue protein sequence, read N- to C-terminus: Ig heavy chain V region 36-65 (120 aa).

In terms of domain architecture, Ig-like spans 1–111 (VQLQQSGAEL…GGSYYFDYWG (111 aa)).

This Mus musculus (Mouse) protein is Ig heavy chain V region 36-65.